Here is a 406-residue protein sequence, read N- to C-terminus: Cysteine desulfurase (406 aa).

Lys-226 carries the post-translational modification N6-(pyridoxal phosphate)lysine. Cys-364 functions as the Cysteine persulfide intermediate in the catalytic mechanism.

It belongs to the class-V pyridoxal-phosphate-dependent aminotransferase family. Csd subfamily. As to quaternary structure, homodimer. Interacts with SufE and the SufBCD complex composed of SufB, SufC and SufD. The interaction with SufE is required to mediate the direct transfer of the sulfur atom from the S-sulfanylcysteine. It depends on pyridoxal 5'-phosphate as a cofactor.

It localises to the cytoplasm. The catalysed reaction is (sulfur carrier)-H + L-cysteine = (sulfur carrier)-SH + L-alanine. It carries out the reaction L-selenocysteine + AH2 = hydrogenselenide + L-alanine + A + H(+). The protein operates within cofactor biosynthesis; iron-sulfur cluster biosynthesis. In terms of biological role, cysteine desulfurases mobilize the sulfur from L-cysteine to yield L-alanine, an essential step in sulfur metabolism for biosynthesis of a variety of sulfur-containing biomolecules. Component of the suf operon, which is activated and required under specific conditions such as oxidative stress and iron limitation. Acts as a potent selenocysteine lyase in vitro, that mobilizes selenium from L-selenocysteine. Selenocysteine lyase activity is however unsure in vivo. This is Cysteine desulfurase from Salmonella agona (strain SL483).